A 286-amino-acid polypeptide reads, in one-letter code: Pantothenate synthetase (286 aa).

30-37 (MGNLHEGH) is a binding site for ATP. The Proton donor role is filled by His-37. Gln-61 provides a ligand contact to (R)-pantoate. Residue Gln-61 coordinates beta-alanine. 149 to 152 (GRKD) provides a ligand contact to ATP. Gln-155 provides a ligand contact to (R)-pantoate. ATP is bound by residues Val-178 and 186–189 (MSSR).

Belongs to the pantothenate synthetase family. As to quaternary structure, homodimer.

The protein localises to the cytoplasm. The enzyme catalyses (R)-pantoate + beta-alanine + ATP = (R)-pantothenate + AMP + diphosphate + H(+). It participates in cofactor biosynthesis; (R)-pantothenate biosynthesis; (R)-pantothenate from (R)-pantoate and beta-alanine: step 1/1. Functionally, catalyzes the condensation of pantoate with beta-alanine in an ATP-dependent reaction via a pantoyl-adenylate intermediate. The polypeptide is Pantothenate synthetase (Alkalilimnicola ehrlichii (strain ATCC BAA-1101 / DSM 17681 / MLHE-1)).